We begin with the raw amino-acid sequence, 199 residues long: Large ribosomal subunit protein eL13B (199 aa).

2 positions are modified to phosphothreonine: T144 and T152.

It belongs to the eukaryotic ribosomal protein eL13 family. In terms of assembly, component of the large ribosomal subunit (LSU). Mature yeast ribosomes consist of a small (40S) and a large (60S) subunit. The 40S small subunit contains 1 molecule of ribosomal RNA (18S rRNA) and 33 different proteins (encoded by 57 genes). The large 60S subunit contains 3 rRNA molecules (25S, 5.8S and 5S rRNA) and 46 different proteins (encoded by 81 genes).

Its subcellular location is the cytoplasm. In terms of biological role, component of the ribosome, a large ribonucleoprotein complex responsible for the synthesis of proteins in the cell. The small ribosomal subunit (SSU) binds messenger RNAs (mRNAs) and translates the encoded message by selecting cognate aminoacyl-transfer RNA (tRNA) molecules. The large subunit (LSU) contains the ribosomal catalytic site termed the peptidyl transferase center (PTC), which catalyzes the formation of peptide bonds, thereby polymerizing the amino acids delivered by tRNAs into a polypeptide chain. The nascent polypeptides leave the ribosome through a tunnel in the LSU and interact with protein factors that function in enzymatic processing, targeting, and the membrane insertion of nascent chains at the exit of the ribosomal tunnel. In Saccharomyces cerevisiae (strain ATCC 204508 / S288c) (Baker's yeast), this protein is Large ribosomal subunit protein eL13B.